Reading from the N-terminus, the 712-residue chain is Serrate RNA effector molecule homolog (712 aa).

3 disordered regions span residues 1–80 (MVDS…DSIY), 214–256 (ADIK…TEKS), and 620–712 (QRPV…DDIP). Basic and acidic residues-rich tracts occupy residues 8–26 (GDRRRDKFARERRDEDYRR) and 34–54 (YDNKRPGGRRDDYQVKRSRGD). Over residues 65-79 (RSGNGSDLPTESDSI) the composition is skewed to polar residues. The segment covering 214-236 (ADIKKDENGNGTEQPKEEPEVKQ) has biased composition (basic and acidic residues). Positions 240 to 251 (ATEELEEGAIED) are enriched in acidic residues. 2 stretches are compositionally biased toward basic and acidic residues: residues 621–637 (RPVDCEPKQAPRDDHRG) and 645–655 (GYGRERDDDRG). The span at 656-668 (PGGGGRNSFGGGG) shows a compositional bias: gly residues.

Belongs to the ARS2 family.

Its subcellular location is the nucleus. In terms of biological role, acts as a mediator between the cap-binding complex (CBC) and the primary microRNAs (miRNAs) processing machinery. Contributes to the stability and delivery of capped primary miRNA transcripts to the primary miRNA processing complex, thereby playing a role in RNA-mediated gene silencing (RNAi) by miRNAs. The sequence is that of Serrate RNA effector molecule homolog from Caenorhabditis elegans.